A 176-amino-acid chain; its full sequence is Adenylyl-sulfate kinase (176 aa).

12–19 is an ATP binding site; sequence GLSGAGKS. The active-site Phosphoserine intermediate is serine 86.

It belongs to the APS kinase family.

The enzyme catalyses adenosine 5'-phosphosulfate + ATP = 3'-phosphoadenylyl sulfate + ADP + H(+). It participates in sulfur metabolism; hydrogen sulfide biosynthesis; sulfite from sulfate: step 2/3. In terms of biological role, catalyzes the synthesis of activated sulfate. This is Adenylyl-sulfate kinase from Gloeothece citriformis (strain PCC 7424) (Cyanothece sp. (strain PCC 7424)).